Here is a 369-residue protein sequence, read N- to C-terminus: Glutamate 5-kinase (369 aa).

Lys14 is a binding site for ATP. Ser56, Asp143, and Asn155 together coordinate substrate. Residues 175–176 and 215–221 each bind ATP; these read SD and TGGMASK. Residues 277 to 351 enclose the PUA domain; it reads AGKIRLDQGA…GMKTQELPDD (75 aa).

Belongs to the glutamate 5-kinase family.

Its subcellular location is the cytoplasm. The enzyme catalyses L-glutamate + ATP = L-glutamyl 5-phosphate + ADP. The protein operates within amino-acid biosynthesis; L-proline biosynthesis; L-glutamate 5-semialdehyde from L-glutamate: step 1/2. Functionally, catalyzes the transfer of a phosphate group to glutamate to form L-glutamate 5-phosphate. This Corynebacterium efficiens (strain DSM 44549 / YS-314 / AJ 12310 / JCM 11189 / NBRC 100395) protein is Glutamate 5-kinase.